The following is a 338-amino-acid chain: uncharacterized protein (338 aa).

Positions 111-334 constitute a Radical SAM core domain; sequence HLGEERVLVP…LELAEKYNLD (224 aa). [4Fe-4S] cluster-binding residues include Cys-129, Cys-133, and Cys-136.

Requires [4Fe-4S] cluster as cofactor.

This is an uncharacterized protein from Methanocaldococcus jannaschii (strain ATCC 43067 / DSM 2661 / JAL-1 / JCM 10045 / NBRC 100440) (Methanococcus jannaschii).